A 104-amino-acid polypeptide reads, in one-letter code: Salivary protein FS145 (104 aa).

The signal sequence occupies residues 1-18 (MKLFAVFLLFCLVNQIYC). 4 disulfides stabilise this stretch: Cys32/Cys80, Cys62/Cys89, Cys72/Cys100, and Cys76/Cys102. Residues 92–94 (WGD) carry the Putative integrin attachment site; atypical (WGD) motif.

In terms of assembly, interacts with host integrin alpha-V/beta-3 (ITGAV:ITGB3).

It localises to the secreted. Functionally, inhibits proliferation, adhesion and migration of host cells as well as host angiogenesis by blocking host integrin alpha-V/beta-3 (ITGAV:ITGB3). This chain is Salivary protein FS145, found in Xenopsylla cheopis (Oriental rat flea).